Reading from the N-terminus, the 243-residue chain is Homeobox protein goosecoid isoform A (243 aa).

The segment at residues 148–207 (KRRHRTIFTDEQLEALENLFQETKYPDVGTREQLARRVHLREEKVEVWFKNRRAKWRRQK) is a DNA-binding region (homeobox). Residues 201–243 (AKWRRQKRSSSEESENAQKWNKSSKNSAEKADEQVKSDLDSDS) are disordered. A compositionally biased stretch (polar residues) spans 217–226 (AQKWNKSSKN). The segment covering 227 to 243 (SAEKADEQVKSDLDSDS) has biased composition (basic and acidic residues).

Belongs to the paired homeobox family. Bicoid subfamily. In terms of tissue distribution, at the start of gastrulation, it is found in a patch of cells encompassing 60 degrees of arc on the dorsal marginal zone.

It localises to the nucleus. Functionally, plays a central role in executing Spemann's organizer phenomenon (the dorsal blastopore lip of the early Xenopus laevis gastrula can organize a complete secondary body axis when transplanted to another embryo). The polypeptide is Homeobox protein goosecoid isoform A (gsc-a) (Xenopus laevis (African clawed frog)).